The sequence spans 308 residues: tRNA dimethylallyltransferase (308 aa).

ATP is bound at residue 14 to 21; that stretch reads GPTASGKT. 16–21 is a binding site for substrate; sequence TASGKT. Interaction with substrate tRNA regions lie at residues 39-42, 163-167, and 244-249; these read DSAL, QRLSR, and RCVGYR.

Belongs to the IPP transferase family. In terms of assembly, monomer. It depends on Mg(2+) as a cofactor.

The enzyme catalyses adenosine(37) in tRNA + dimethylallyl diphosphate = N(6)-dimethylallyladenosine(37) in tRNA + diphosphate. Its function is as follows. Catalyzes the transfer of a dimethylallyl group onto the adenine at position 37 in tRNAs that read codons beginning with uridine, leading to the formation of N6-(dimethylallyl)adenosine (i(6)A). This is tRNA dimethylallyltransferase from Shewanella loihica (strain ATCC BAA-1088 / PV-4).